We begin with the raw amino-acid sequence, 672 residues long: MRTALLEVGLEELPASEFHSILKQLEERSTELLKAYRISSGSAEVFVGSRRFGVILKNLPERQEDFTEEKKGPPLNVAYDENGKPTKALEGFLRNNNASLENVVHREGYIYLSRVVEGKPVEEVLPDLFRDLVLGLNFRKPMRWGSGEHEYIRPVHWIVAMVDGRVLDLEIFGLRSSRISYGKRYHAGSIKIPDPERYYESLKKGFVISSHLERKKFVLEQIDEFEKRSGMKIERDEELIEEIVAITEYPRIVVGQFDRKYLELPEEIIVTAVKHHQRSFIAHKETLTNTFVAFQDGPQPPENVVKGYERVINARLEDARYYFQKDLETPLEKMNEKLKEIVFQEKLGTLYDKVERIKKISERLCEDLKLPESFTQKVLEAASICKADIASKVVYEFPELQGVMGRIYALREGINEEIATAIEDHYSEEPQTVIGSILGIADRIDTIVGNFAIGNVPTSSKDPYGLKNKADAIFRIIRKNEWDISLEELLTFASSLVGYRLSEELETFFAGRFYQFLVNELGISFDVARAVNHLWKRPLRGILSAEALQEISEKPEFQDLFVGFERVHNITKNHDSVRFDGALFEKEEEKKLMNKFYEVKEKVLKALERLNYREALQYLIELKPYIDEYFDNVFVMVKRDDLRVNRLGFLKNIDELFMMVGDMTYLVKRSQV.

This sequence belongs to the class-II aminoacyl-tRNA synthetase family. In terms of assembly, tetramer of two alpha and two beta subunits.

Its subcellular location is the cytoplasm. The catalysed reaction is tRNA(Gly) + glycine + ATP = glycyl-tRNA(Gly) + AMP + diphosphate. The chain is Glycine--tRNA ligase beta subunit from Thermotoga petrophila (strain ATCC BAA-488 / DSM 13995 / JCM 10881 / RKU-1).